Here is a 393-residue protein sequence, read N- to C-terminus: Flavohemoprotein (393 aa).

Residues 1–139 (MLSAEHRAIV…LADLLIGLEE (139 aa)) enclose the Globin domain. Histidine 85 provides a ligand contact to heme b. Catalysis depends on charge relay system residues tyrosine 95 and glutamate 138. The tract at residues 150–393 (GGWRGTRAFV…EFFGPASALD (244 aa)) is reductase. In terms of domain architecture, FAD-binding FR-type spans 153-256 (RGTRAFVVAR…LTPSGDFTLE (104 aa)). FAD contacts are provided by residues tyrosine 191 and 205–208 (RNYS). 268-273 (GVGITP) lines the NADP(+) pocket. Residue 385–388 (FFGP) coordinates FAD.

The protein belongs to the globin family. Two-domain flavohemoproteins subfamily. It in the C-terminal section; belongs to the flavoprotein pyridine nucleotide cytochrome reductase family. Requires heme b as cofactor. The cofactor is FAD.

It carries out the reaction 2 nitric oxide + NADPH + 2 O2 = 2 nitrate + NADP(+) + H(+). The catalysed reaction is 2 nitric oxide + NADH + 2 O2 = 2 nitrate + NAD(+) + H(+). Functionally, is involved in NO detoxification in an aerobic process, termed nitric oxide dioxygenase (NOD) reaction that utilizes O(2) and NAD(P)H to convert NO to nitrate, which protects the bacterium from various noxious nitrogen compounds. Therefore, plays a central role in the inducible response to nitrosative stress. The sequence is that of Flavohemoprotein from Burkholderia sp. (strain TH2).